A 151-amino-acid chain; its full sequence is UPF0178 protein PSHAb0045 (151 aa).

Belongs to the UPF0178 family.

This chain is UPF0178 protein PSHAb0045, found in Pseudoalteromonas translucida (strain TAC 125).